The chain runs to 397 residues: Phosphoglycerate kinase (397 aa).

Substrate contacts are provided by residues D21–N23, R37, H60–R63, R119, and R152. Residues K203, G294, E325, and G354–S357 contribute to the ATP site.

Belongs to the phosphoglycerate kinase family. Monomer.

The protein localises to the cytoplasm. It catalyses the reaction (2R)-3-phosphoglycerate + ATP = (2R)-3-phospho-glyceroyl phosphate + ADP. It participates in carbohydrate degradation; glycolysis; pyruvate from D-glyceraldehyde 3-phosphate: step 2/5. In Prosthecochloris aestuarii (strain DSM 271 / SK 413), this protein is Phosphoglycerate kinase.